A 62-amino-acid polypeptide reads, in one-letter code: Photosystem II reaction center protein Z (62 aa).

The next 2 membrane-spanning stretches (helical) occupy residues 8-28 (SVFALITISFLLVIGVPVVLA) and 41-61 (FSGASLWIGLVFLVGILNSLI).

This sequence belongs to the PsbZ family. PSII is composed of 1 copy each of membrane proteins PsbA, PsbB, PsbC, PsbD, PsbE, PsbF, PsbH, PsbI, PsbJ, PsbK, PsbL, PsbM, PsbT, PsbY, PsbZ, Psb30/Ycf12, at least 3 peripheral proteins of the oxygen-evolving complex and a large number of cofactors. It forms dimeric complexes.

It localises to the plastid. It is found in the chloroplast thylakoid membrane. Functionally, may control the interaction of photosystem II (PSII) cores with the light-harvesting antenna, regulates electron flow through the 2 photosystem reaction centers. PSII is a light-driven water plastoquinone oxidoreductase, using light energy to abstract electrons from H(2)O, generating a proton gradient subsequently used for ATP formation. This is Photosystem II reaction center protein Z from Psilotum nudum (Whisk fern).